The following is a 173-amino-acid chain: Small ribosomal subunit protein uS11m (173 aa).

This sequence belongs to the universal ribosomal protein uS11 family.

Its subcellular location is the mitochondrion. This is Small ribosomal subunit protein uS11m (RPS11) from Acanthamoeba castellanii (Amoeba).